Consider the following 236-residue polypeptide: Orotidine 5'-phosphate decarboxylase (236 aa).

Residues Asp-17, Lys-39, 66-75, Thr-125, Arg-186, Gln-195, Gly-215, and Arg-216 contribute to the substrate site; that span reads DLKFHDIPNT. Residue Lys-68 is the Proton donor of the active site.

The protein belongs to the OMP decarboxylase family. Type 1 subfamily. In terms of assembly, homodimer.

The catalysed reaction is orotidine 5'-phosphate + H(+) = UMP + CO2. Its pathway is pyrimidine metabolism; UMP biosynthesis via de novo pathway; UMP from orotate: step 2/2. Catalyzes the decarboxylation of orotidine 5'-monophosphate (OMP) to uridine 5'-monophosphate (UMP). The sequence is that of Orotidine 5'-phosphate decarboxylase from Buchnera aphidicola subsp. Schizaphis graminum (strain Sg).